We begin with the raw amino-acid sequence, 108 residues long: T-cell acute lymphocytic leukemia protein 2 (108 aa).

The bHLH domain maps to 2–54; sequence TRKIFTNTRERWRQQNVNSAFAKLRKLIPTHPPDKKLSKNETLRLAMRYINFL. Residues 89–108 are disordered; the sequence is DRTLLENYQVPSPGPSHHIP.

The protein is T-cell acute lymphocytic leukemia protein 2 (TAL2) of Homo sapiens (Human).